A 255-amino-acid chain; its full sequence is MLDVEGLHLKRGSSEVLSDIRLQLRPGQILGVLGPNGAGKSSLLGALCGELSPSAGQVRLDGRDLHAWPGQERARRLAVLPQASSLGFAFSVEEVVGLGRLPHASGRQRDREIVEAALAAADAGHLASRSYLALSGGERQRVHLARVLAQLWPGEAGTTLLLDEPTSALDPLHQHTTLQAVRSFADRGAAVLVILHDLNLAARYCDHILLLEHGRSHALDTPQRVLTPAALNAVFGIDVLVQPHPERGHPLIITR.

An ABC transporter domain is found at 2-238; sequence LDVEGLHLKR…AALNAVFGID (237 aa). An ATP-binding site is contributed by 34–41; the sequence is GPNGAGKS.

It belongs to the ABC transporter superfamily. Heme (hemin) importer (TC 3.A.1.14.5) family. The complex is composed of two ATP-binding proteins (HmuV), two transmembrane proteins (HmuU) and a solute-binding protein (HmuT).

The protein resides in the cell inner membrane. In terms of biological role, part of the ABC transporter complex HmuTUV involved in hemin import. Responsible for energy coupling to the transport system. This is Hemin import ATP-binding protein HmuV from Pseudomonas entomophila (strain L48).